The chain runs to 402 residues: Envelope glycoprotein D (402 aa).

Residues 1 to 30 (MSTFKLMMDGRLVFAMAIAILSVVLSCGTC) form the signal peptide. Topologically, residues 31-355 (EKAKRAVRGR…NSTFVGISVG (325 aa)) are virion surface. Asn-53 and Asn-61 each carry an N-linked (GlcNAc...) asparagine; by host glycan. 3 disulfide bridges follow: Cys-88–Cys-209, Cys-126–Cys-223, and Cys-138–Cys-147. The disordered stretch occupies residues 281–315 (PDNHPGFDSVESEITQNKTDPKPGQADPKPNQPFK). N-linked (GlcNAc...) asparagine; by host glycans are attached at residues Asn-297 and Asn-346. Residues 356–372 (LGIAGLVLVGVILYVCL) form a helical membrane-spanning segment. The Intravirion portion of the chain corresponds to 373–402 (RRKKELKKSAQNGLTRLRSTFKDVKYTQLP).

It belongs to the herpesviridae glycoprotein D family.

Its subcellular location is the virion membrane. Envelope glycoprotein that binds to host cell entry receptors, promoting the virus entry into host cells. May trigger fusion with host membrane, by recruiting the fusion machinery composed of gB and gH/gL. This is Envelope glycoprotein D (gD) from Equus caballus (Horse).